A 1583-amino-acid chain; its full sequence is MAAASAGQQQQQHQHQHKLNIAGSAETVVSGMQHQQQHQQQHQQINMFKQQQQMLPLQQQHHQFFQQQQTKFVSRVVTSAAVHQQQQQHHHQQQQQQQHQQQQQILPAGLVNGNGSGNMMQVANLHLQQQQQQRNSQQHIFVCPTSNQQLLLQQQQQQQQQQQQQQTKQRQAQIKLPIKSAATTGVTAATVAAATAATGATHCMSTTIAARQMSQNNQLYAKNVAKANNASSNGNINRKTATSYNGNLAPGWRRLTNNNEVAYISPSGKTLRTQFQIKDYLLTQGTCKCGLPCPLRPEYLFDFNAQVPNQPLKLPTEASTATPTPCRHQRRFLESQQLQLPQQQQQQQHLQHQQQQQQAVKDVSVDVAVSVSGPAAVSDVFSTLMTSTARTATMVTPTAATSPAQAATTTTHEMANKDADCHKYGNNKLPATNRTATTPTPAPTPPPQHPNGMPTSQALALGGVPVGVHPKRPTGGHVIKQPASVLGPPCTPPLAVGGANTVIQQQQPLQQHPNFKDDPAGYLQQQTALLHNSLGVGLDATKTAAGTSTARALPQEPIVHSSQQQQQQQQQQLQQQQQLQRQKIRRLSLFGKWETDPAPATNSQPTNGTRALQVDAAAFARPQKPQVTCVTLVPPPQESPVSSSAAETLEKRPEQVGAISTSHESPRQSLSSPTDSVDSAKSTPSASPKPQTQVPMQPQLLQMRPHLQANLSAQTPVTVPAHVRVMRQQQAQIIPGQRLPVASSSAAMATMTRSIVTSTAGTSTITGRPVATTLNNSNPTVAQLQSMANAMNGAGGGGQLIMTSSGQLLVIPTPSKQTTQHHRPGQPGQGVIIQQQQPAELHPQPGGGYIVSQPSPVAAASSSSSSSTVILNSGGAKLLHHQIITSQAGQINQATSGGSGNQPQTVLLNTLPNGGYIVQQQPQTQSPQQAEQILAMPQPPPAQTLIISSPDTKRRARKRKSSVCHTPPPSGSPAKIISPQISPSIPNQAPALLHQQAAAAAAAAPQFQQQFQLSPGIQGIVVNKPNPPQQPQTQQLLLQNGQILQQVNLIGQQLLMPAGLVMGPDATLLQIQNMPATSLMTPQGPVMLRTPSPQNKPSFISPSAGGQQYLVGANGQLSPIGQIYSTPMGLVMPTGQQGGASFVQASPTTTTIQIQQQPAPQPTQISLQPAQATYMTETVMSRQGTAASPPDTTTCSPRSPERPSSHRSSGSDMVQCVSSSEPDAAVSPQSTESRQSPSSTDCERSICKNNVFTQPSGIYKHSEPKIRRIHITSQTSAENGISLMQGQESPTTTQLLSSVPTAQPTVEKTTVRTPTKRSRRPQRGAARAAPSASDKSFPLPPRSFAIGELIWGPARGHPAWPGKIVKMPDGVCTPSQQFDHVWVQWFGGGGRSTSELIPVNSLQSLSEGLEAHHKAQKDTRKSRKLNSQLERAIQEAMTELDNISASSTPAATSSSSATISAVPASAGPAVIGGQQQYQQQQQQQQQQQSPSSTNNKINGLARSKRQANTSGASMVLTTSTAATLSGLFNQQRAKPIRIAPAPPVATTGTGNIGTIAAAGAAAASTGTGTATTSARSEILKLAK.

A disordered region spans residues 81–115 (AVHQQQQQHHHQQQQQQQHQQQQQILPAGLVNGNG). Over residues 83 to 104 (HQQQQQHHHQQQQQQQHQQQQQ) the composition is skewed to low complexity. The region spanning 238–308 (RKTATSYNGN…YLFDFNAQVP (71 aa)) is the MBD domain. 7 disordered regions span residues 427–457 (NKLP…PTSQ), 556–579 (EPIV…QQQL), 630–694 (VTLV…QTQV), 839–862 (AELH…AASS), 940–980 (PPAQ…ISPQ), 1179–1247 (VMSR…RSIC), and 1287–1339 (QESP…SFPL). The segment covering 430-439 (PATNRTATTP) has biased composition (low complexity). A compositionally biased stretch (pro residues) spans 440–449 (TPAPTPPPQH). Residues 563 to 579 (QQQQQQQQQQLQQQQQL) show a composition bias toward low complexity. Residues 658–677 (AISTSHESPRQSLSSPTDSV) are compositionally biased toward polar residues. Composition is skewed to low complexity over residues 679 to 693 (SAKS…PQTQ) and 851 to 862 (VSQPSPVAAASS). 3 stretches are compositionally biased toward polar residues: residues 1179–1195 (VMSR…TTTC), 1216–1240 (CVSS…PSST), and 1287–1313 (QESP…TVRT). Residues 1323–1333 (RGAARAAPSAS) show a composition bias toward low complexity. One can recognise a PWWP domain in the interval 1346 to 1408 (IGELIWGPAR…VNSLQSLSEG (63 aa)). Residues 1415-1446 (AQKDTRKSRKLNSQLERAIQEAMTELDNISAS) adopt a coiled-coil conformation. The segment at 1471–1497 (IGGQQQYQQQQQQQQQQQSPSSTNNKI) is disordered. Residues 1474-1488 (QQQYQQQQQQQQQQQ) show a composition bias toward low complexity.

Component of the polycomb repressive deubiquitinase (PR-DUB) complex, at least composed of caly/calypso, Asx and sba (MDB5/6 homolog). Interacts (via MBD domain) with Asx (via PHD domain); the interaction is important for the stability of the PR-DUB complex.

In terms of biological role, non-catalytic component of the polycomb repressive deubiquitinase (PR-DUB) complex, a complex that specifically mediates deubiquitination of histone H2A monoubiquitinated at 'Lys-119' (H2AK118ub1). Important for maintaining stability of the PR-DUB complex. Probable epigenetic regulator involved in developmental pattern formation and eye development. In Drosophila melanogaster (Fruit fly), this protein is Methyl-CpG-binding domain protein 5/6 homolog sba.